An 84-amino-acid polypeptide reads, in one-letter code: Beta-mammal Tt1g (84 aa).

The first 20 residues, 1-20, serve as a signal peptide directing secretion; the sequence is MKGMILFISCILLIGIVVEC. One can recognise an LCN-type CS-alpha/beta domain in the interval 21 to 82; sequence KEGYLMDHEG…VWERATNRCG (62 aa). 4 disulfides stabilise this stretch: C31/C81, C35/C57, C43/C62, and C47/C64. C81 is subject to Cysteine amide.

Belongs to the long (4 C-C) scorpion toxin superfamily. Sodium channel inhibitor family. Beta subfamily. As to expression, expressed by the venom gland.

It localises to the secreted. Functionally, beta toxins modify sodium channel function in two ways: an excitatory effect (shifting the activation process to more negative potential) and/or a depressant effect (reducing the peak current). At concentration of 500 nM this toxin produces channel opening at more negative potentials in hNav1.2/SCN2A and hNav1.3/SCN3A, which shows the biggest effect. On the other hand the peak current is decreased in hNav1.4/SCN4A and hNav1.5/SCN5A channels, without apparent modification of the activation gate. This toxin is active against mammals. The chain is Beta-mammal Tt1g from Tityus trivittatus (Argentinean scorpion).